Here is a 287-residue protein sequence, read N- to C-terminus: Lipoyl synthase (287 aa).

7 residues coordinate [4Fe-4S] cluster: Cys38, Cys43, Cys49, Cys64, Cys68, Cys71, and Ser277. The 217-residue stretch at 50–266 (WSRGTATFLL…KTVAESLGLR (217 aa)) folds into the Radical SAM core domain.

Belongs to the radical SAM superfamily. Lipoyl synthase family. [4Fe-4S] cluster is required as a cofactor.

The protein resides in the cytoplasm. The catalysed reaction is [[Fe-S] cluster scaffold protein carrying a second [4Fe-4S](2+) cluster] + N(6)-octanoyl-L-lysyl-[protein] + 2 oxidized [2Fe-2S]-[ferredoxin] + 2 S-adenosyl-L-methionine + 4 H(+) = [[Fe-S] cluster scaffold protein] + N(6)-[(R)-dihydrolipoyl]-L-lysyl-[protein] + 4 Fe(3+) + 2 hydrogen sulfide + 2 5'-deoxyadenosine + 2 L-methionine + 2 reduced [2Fe-2S]-[ferredoxin]. It functions in the pathway protein modification; protein lipoylation via endogenous pathway; protein N(6)-(lipoyl)lysine from octanoyl-[acyl-carrier-protein]: step 2/2. Its function is as follows. Catalyzes the radical-mediated insertion of two sulfur atoms into the C-6 and C-8 positions of the octanoyl moiety bound to the lipoyl domains of lipoate-dependent enzymes, thereby converting the octanoylated domains into lipoylated derivatives. The polypeptide is Lipoyl synthase (Chlorobium phaeobacteroides (strain DSM 266 / SMG 266 / 2430)).